We begin with the raw amino-acid sequence, 677 residues long: Methionine--tRNA ligase (677 aa).

A 'HIGH' region motif is present at residues 15 to 25 (PYANGSIHLGH). Cysteine 146, cysteine 149, cysteine 159, and cysteine 162 together coordinate Zn(2+). The short motif at 333–337 (KMSKS) is the 'KMSKS' region element. Position 336 (lysine 336) interacts with ATP. A tRNA-binding domain is found at 575–677 (DFAKVDLRVA…DGAKPGQQVK (103 aa)).

Belongs to the class-I aminoacyl-tRNA synthetase family. MetG type 1 subfamily. Homodimer. Zn(2+) serves as cofactor.

It is found in the cytoplasm. It catalyses the reaction tRNA(Met) + L-methionine + ATP = L-methionyl-tRNA(Met) + AMP + diphosphate. In terms of biological role, is required not only for elongation of protein synthesis but also for the initiation of all mRNA translation through initiator tRNA(fMet) aminoacylation. In Citrobacter koseri (strain ATCC BAA-895 / CDC 4225-83 / SGSC4696), this protein is Methionine--tRNA ligase.